Here is a 257-residue protein sequence, read N- to C-terminus: Indole-3-glycerol phosphate synthase (257 aa).

The protein belongs to the TrpC family.

It catalyses the reaction 1-(2-carboxyphenylamino)-1-deoxy-D-ribulose 5-phosphate + H(+) = (1S,2R)-1-C-(indol-3-yl)glycerol 3-phosphate + CO2 + H2O. It functions in the pathway amino-acid biosynthesis; L-tryptophan biosynthesis; L-tryptophan from chorismate: step 4/5. This Chlorobium chlorochromatii (strain CaD3) protein is Indole-3-glycerol phosphate synthase.